The following is a 344-amino-acid chain: Oxygen sensor histidine kinase NreB (344 aa).

Cys58, Cys61, Cys73, and Cys76 together coordinate [4Fe-4S] cluster. The Histidine kinase domain maps to 147 to 344 (ENERKRISRE…GTIITLEVPV (198 aa)). The residue at position 158 (His158) is a Phosphohistidine; by autocatalysis.

It depends on [4Fe-4S] cluster as a cofactor. In terms of processing, autophosphorylated.

It localises to the cytoplasm. The enzyme catalyses ATP + protein L-histidine = ADP + protein N-phospho-L-histidine.. Functionally, member of the two-component regulatory system NreB/NreC involved in the control of dissimilatory nitrate/nitrite reduction in response to oxygen. NreB functions as a direct oxygen sensor histidine kinase which is autophosphorylated, in the absence of oxygen, probably at the conserved histidine residue, and transfers its phosphate group probably to a conserved aspartate residue of NreC. NreB/NreC activates the expression of the nitrate (narGHJI) and nitrite (nir) reductase operons, as well as the putative nitrate transporter gene narT. This chain is Oxygen sensor histidine kinase NreB (nreB), found in Staphylococcus haemolyticus (strain JCSC1435).